Reading from the N-terminus, the 135-residue chain is Ribosome-binding factor A (135 aa).

It belongs to the RbfA family. In terms of assembly, monomer. Binds 30S ribosomal subunits, but not 50S ribosomal subunits or 70S ribosomes.

The protein localises to the cytoplasm. Its function is as follows. One of several proteins that assist in the late maturation steps of the functional core of the 30S ribosomal subunit. Associates with free 30S ribosomal subunits (but not with 30S subunits that are part of 70S ribosomes or polysomes). Required for efficient processing of 16S rRNA. May interact with the 5'-terminal helix region of 16S rRNA. The sequence is that of Ribosome-binding factor A from Bartonella tribocorum (strain CIP 105476 / IBS 506).